The chain runs to 175 residues: Large ribosomal subunit protein uL10 (175 aa).

This sequence belongs to the universal ribosomal protein uL10 family. As to quaternary structure, part of the ribosomal stalk of the 50S ribosomal subunit. The N-terminus interacts with L11 and the large rRNA to form the base of the stalk. The C-terminus forms an elongated spine to which L12 dimers bind in a sequential fashion forming a multimeric L10(L12)X complex.

Its function is as follows. Forms part of the ribosomal stalk, playing a central role in the interaction of the ribosome with GTP-bound translation factors. This is Large ribosomal subunit protein uL10 from Synechococcus sp. (strain WH7803).